The following is an 81-amino-acid chain: Large ribosomal subunit protein bL31B (81 aa).

This sequence belongs to the bacterial ribosomal protein bL31 family. Type B subfamily. As to quaternary structure, part of the 50S ribosomal subunit.

The protein is Large ribosomal subunit protein bL31B of Bacillus cereus (strain ATCC 10987 / NRS 248).